A 429-amino-acid chain; its full sequence is SVP1-like protein 2 (429 aa).

WD repeat units follow at residues 10-48, 50-96, 178-218, and 223-262; these read PVLA…LRTS, DFGA…QVGV, AHTS…RLYE, and IDKA…GTRP. The interval 262–297 is disordered; sequence PITSNGGTAYAAGEPSVTGNNRPSSPYSVASSSGGG.

This sequence belongs to the WD repeat PROPPIN family.

The protein resides in the vacuole membrane. The protein localises to the cytoplasmic vesicle membrane. Involved in mitochondrial or peroxisomal functions and amino acid signaling pathways. The chain is SVP1-like protein 2 (apg-14) from Neurospora crassa (strain ATCC 24698 / 74-OR23-1A / CBS 708.71 / DSM 1257 / FGSC 987).